A 97-amino-acid chain; its full sequence is MICOS complex subunit MIC12 (97 aa).

A helical membrane pass occupies residues 7 to 24 (LTSITAVSSTLAASYYFY).

Belongs to the MICOS complex subunit Mic12 family. As to quaternary structure, component of the mitochondrial contact site and cristae organizing system (MICOS) complex.

The protein resides in the mitochondrion inner membrane. In terms of biological role, component of the MICOS complex, a large protein complex of the mitochondrial inner membrane that plays crucial roles in the maintenance of crista junctions, inner membrane architecture, and formation of contact sites to the outer membrane. This Zygosaccharomyces rouxii (strain ATCC 2623 / CBS 732 / NBRC 1130 / NCYC 568 / NRRL Y-229) protein is MICOS complex subunit MIC12 (AIM5).